A 527-amino-acid chain; its full sequence is Cytochrome P450 monooygenase 3 (527 aa).

The helical transmembrane segment at Ile-21–Ile-41 threads the bilayer. Cys-473 is a binding site for heme.

This sequence belongs to the cytochrome P450 family. It depends on heme as a cofactor.

The protein resides in the membrane. The protein operates within plant hormone biosynthesis; gibberellin biosynthesis. In terms of biological role, gibberellin 13-hydroxylase; part of the gene cluster that mediates the biosynthesis of gibberellins (GAs), diterpenoids that may provide a selective advantage during infection of the preferred host plant, rice. Gibberellins (GAs) are diterpenoids and are synthesized via the mevalonate pathway. Biosynthesis of the major metabolite GA3 (gibberellic acid) from geranylgeranyl diphosphate (GGPP) requires 13 steps. The GGPP produced by the geranylgeranyl diphosphate synthase GGS2 is converted to ent-kaurene via ent-copalyldiphosphate in a two-step cyclization reaction performed by the bifunctional ent-copalyl diphosphate synthase/ent-kaurene synthase enzyme (CPS/KS). Ent-Kaurene is metabolized to GAs by a series of oxidation reactions catalyzed by cytochrome P450 monooxygenases. Cytochrome P450 monooxygenase P450-4 is an ent-kaurene oxidase that catalyzes the three oxidation steps between ent-kaurene and ent-kaurenoic acid. The highly multifunctional cytochrome P450 monooxygenase P450-1 then catalyzes four steps involving oxidation at two carbon atoms, in the main pathway from ent-kaurenoic acid to GA14 via GA12-aldehyde as well as producing kaurenolides and fujenoic acids as by-products. The cytochrome P450 monooxygenase P450-2 then converts GA14 to GA4 by removal of C-20. GA4 is further converted to GA7 by the GA4 desaturase DES via 1,2-desaturation before cytochrome P450 monooxygenase P450-3, a 13-hydroxylase, hydroxylates GA7 to GA3, the final product of the GA-biosynthetic pathway. This chain is Cytochrome P450 monooygenase 3, found in Gibberella fujikuroi (strain CBS 195.34 / IMI 58289 / NRRL A-6831) (Bakanae and foot rot disease fungus).